Here is a 180-residue protein sequence, read N- to C-terminus: uncharacterized protein (180 aa).

Residues 17 to 80 (RRSRILHYLM…LIPNMGVRLT (64 aa)) enclose the HTH dtxR-type domain.

This sequence belongs to the DtxR/MntR family.

This is an uncharacterized protein from Aeropyrum pernix (strain ATCC 700893 / DSM 11879 / JCM 9820 / NBRC 100138 / K1).